Consider the following 129-residue polypeptide: D-ribose pyranase (129 aa).

The Proton donor role is filled by histidine 20. Substrate is bound by residues aspartate 28, histidine 96, and 118 to 120 (YAN).

The protein belongs to the RbsD / FucU family. RbsD subfamily. As to quaternary structure, homodecamer.

The protein resides in the cytoplasm. It carries out the reaction beta-D-ribopyranose = beta-D-ribofuranose. It participates in carbohydrate metabolism; D-ribose degradation; D-ribose 5-phosphate from beta-D-ribopyranose: step 1/2. In terms of biological role, catalyzes the interconversion of beta-pyran and beta-furan forms of D-ribose. This chain is D-ribose pyranase, found in Exiguobacterium sp. (strain ATCC BAA-1283 / AT1b).